We begin with the raw amino-acid sequence, 587 residues long: tRNA (guanine(37)-N(1))-methyltransferase 2 (587 aa).

Residues Arg360 and 430–431 contribute to the S-adenosyl-L-methionine site; that span reads DA. Residues 446–469 are disordered; it reads ASTRSRKEDVTNKDGNHVTPTEPM. Basic and acidic residues predominate over residues 450-461; sequence SRKEDVTNKDGN. S-adenosyl-L-methionine is bound at residue Asn478.

It belongs to the class I-like SAM-binding methyltransferase superfamily. TRM5/TYW2 family. As to quaternary structure, monomer.

The protein localises to the mitochondrion matrix. The protein resides in the nucleus. Its subcellular location is the cytoplasm. The catalysed reaction is guanosine(37) in tRNA + S-adenosyl-L-methionine = N(1)-methylguanosine(37) in tRNA + S-adenosyl-L-homocysteine + H(+). Specifically methylates the N1 position of guanosine-37 in various cytoplasmic and mitochondrial tRNAs. Methylation is not dependent on the nature of the nucleoside 5' of the target nucleoside. This is the first step in the biosynthesis of wybutosine (yW), a modified base adjacent to the anticodon of tRNAs and required for accurate decoding. The polypeptide is tRNA (guanine(37)-N(1))-methyltransferase 2 (Phaeodactylum tricornutum (strain CCAP 1055/1)).